We begin with the raw amino-acid sequence, 31 residues long: Cytochrome b6-f complex subunit 6 (31 aa).

The chain crosses the membrane as a helical span at residues 4-26; that stretch reads ITSYFGFLLAASTITPALLIGLN.

It belongs to the PetL family. The 4 large subunits of the cytochrome b6-f complex are cytochrome b6, subunit IV (17 kDa polypeptide, PetD), cytochrome f and the Rieske protein, while the 4 small subunits are PetG, PetL, PetM and PetN. The complex functions as a dimer.

The protein localises to the plastid. It is found in the chloroplast thylakoid membrane. Component of the cytochrome b6-f complex, which mediates electron transfer between photosystem II (PSII) and photosystem I (PSI), cyclic electron flow around PSI, and state transitions. PetL is important for photoautotrophic growth as well as for electron transfer efficiency and stability of the cytochrome b6-f complex. The chain is Cytochrome b6-f complex subunit 6 from Calycanthus floridus var. glaucus (Eastern sweetshrub).